Reading from the N-terminus, the 100-residue chain is MALQDESLGIDQLSVDYDYLVYRISDRVKSLELEATRLVQRQNELVGQVSERVIDENIERFRGVLRGLDELEEYFAMMEQIGMITDSFKERLDSAMAALK.

A coiled-coil region spans residues 25-46 (SDRVKSLELEATRLVQRQNELV).

It belongs to the BLOC1S4 family. Component of the biogenesis of lysosome-related organelles complex-1 (BLOC-1).

Its subcellular location is the cytoplasm. In terms of biological role, component of the biogenesis of lysosome-related organelles complex-1 (BLOC-1), a complex that is involved in endosomal cargo sorting. In Candida glabrata (strain ATCC 2001 / BCRC 20586 / JCM 3761 / NBRC 0622 / NRRL Y-65 / CBS 138) (Yeast), this protein is Biogenesis of lysosome-related organelles complex 1 subunit CNL1 (CLN1).